The following is a 341-amino-acid chain: tRNA N6-adenosine threonylcarbamoyltransferase (341 aa).

Fe cation contacts are provided by His-116 and His-120. Residues 139–143 (LVSGG), Asp-172, Gly-185, and Asn-274 each bind substrate. Asp-302 serves as a coordination point for Fe cation.

Belongs to the KAE1 / TsaD family. Fe(2+) is required as a cofactor.

The protein localises to the cytoplasm. It catalyses the reaction L-threonylcarbamoyladenylate + adenosine(37) in tRNA = N(6)-L-threonylcarbamoyladenosine(37) in tRNA + AMP + H(+). In terms of biological role, required for the formation of a threonylcarbamoyl group on adenosine at position 37 (t(6)A37) in tRNAs that read codons beginning with adenine. Is involved in the transfer of the threonylcarbamoyl moiety of threonylcarbamoyl-AMP (TC-AMP) to the N6 group of A37, together with TsaE and TsaB. TsaD likely plays a direct catalytic role in this reaction. The sequence is that of tRNA N6-adenosine threonylcarbamoyltransferase from Vesicomyosocius okutanii subsp. Calyptogena okutanii (strain HA).